Consider the following 393-residue polypeptide: Phospholipid-transporting ATPase accessory subunit CRF1 (393 aa).

The Cytoplasmic portion of the chain corresponds to 1–46 (MGLILRWKEKKQLSSKQNAQKSRKPANTSFRQQRLKAWQPILSPQS). A helical membrane pass occupies residues 47 to 67 (VLPLLILMACVFAPIGIGLVV). The Lumenal portion of the chain corresponds to 68–334 (STISVQRLVV…NSIIGAGNEA (267 aa)). The segment at 70 to 332 (ISVQRLVVNY…TTNSIIGAGN (263 aa)) is confers specificity for binding DNF3. Residues Asn-78, Asn-123, Asn-187, Asn-202, Asn-213, Asn-240, and Asn-291 are each glycosylated (N-linked (GlcNAc...) asparagine). Cystine bridges form between Cys-82–Cys-126 and Cys-179–Cys-193. The helical transmembrane segment at 335–355 (LGIVYLIVAGIATLFAILFLI) threads the bilayer. The Cytoplasmic segment spans residues 356 to 393 (KVIFKPRPMHDHSYLNFENSDTPFDESSVVSIPLREIL).

The protein belongs to the CDC50/LEM3 family. As to quaternary structure, component of a flippase complex consisting of DNF3 and YNR048W/CRF1. Interacts with DNF3; the interaction is direct and required for proper expression and endoplasmic reticulum (ER) export of either partner.

It localises to the golgi apparatus. The protein localises to the trans-Golgi network membrane. In terms of biological role, accessory component of a P4-ATPase flippase complex which catalyzes the hydrolysis of ATP coupled to the transport of phosphatidylcholine and small amounts of phosphatidylethanolamine from the lumen to the cytosolic leaflet of the trans-Golgi network and ensures the maintenance of asymmetric distribution of phospholipids. May be involved in transport from early endosomes to the trans-Golgi network (TGN). This chain is Phospholipid-transporting ATPase accessory subunit CRF1, found in Saccharomyces cerevisiae (strain ATCC 204508 / S288c) (Baker's yeast).